Reading from the N-terminus, the 162-residue chain is Urease accessory protein UreE 1 (162 aa).

The disordered stretch occupies residues 143 to 162 (SGGHQHHHGHDHDHHHPDHE). Positions 152 to 162 (HDHDHHHPDHE) are enriched in basic and acidic residues.

Belongs to the UreE family.

It localises to the cytoplasm. Involved in urease metallocenter assembly. Binds nickel. Probably functions as a nickel donor during metallocenter assembly. In Brucella suis biovar 1 (strain 1330), this protein is Urease accessory protein UreE 1.